The following is a 382-amino-acid chain: 8-amino-7-oxononanoate synthase (382 aa).

Substrate is bound by residues Arg21 and His131. Pyridoxal 5'-phosphate is bound by residues Ser178, His206, and Thr232. At Lys235 the chain carries N6-(pyridoxal phosphate)lysine. A substrate-binding site is contributed by Thr349.

It belongs to the class-II pyridoxal-phosphate-dependent aminotransferase family. BioF subfamily. Homodimer. Pyridoxal 5'-phosphate is required as a cofactor.

It catalyses the reaction 6-carboxyhexanoyl-[ACP] + L-alanine + H(+) = (8S)-8-amino-7-oxononanoate + holo-[ACP] + CO2. It participates in cofactor biosynthesis; biotin biosynthesis. Functionally, catalyzes the decarboxylative condensation of pimeloyl-[acyl-carrier protein] and L-alanine to produce 8-amino-7-oxononanoate (AON), [acyl-carrier protein], and carbon dioxide. In Serratia marcescens, this protein is 8-amino-7-oxononanoate synthase.